The sequence spans 130 residues: Large ribosomal subunit protein bL12 (130 aa).

The protein belongs to the bacterial ribosomal protein bL12 family. Homodimer. Part of the ribosomal stalk of the 50S ribosomal subunit. Forms a multimeric L10(L12)X complex, where L10 forms an elongated spine to which 2 to 4 L12 dimers bind in a sequential fashion. Binds GTP-bound translation factors.

Forms part of the ribosomal stalk which helps the ribosome interact with GTP-bound translation factors. Is thus essential for accurate translation. In Mycobacterium leprae (strain TN), this protein is Large ribosomal subunit protein bL12.